We begin with the raw amino-acid sequence, 115 residues long: Basic leucine zipper transcriptional factor ATF-like (115 aa).

Positions 1–57 are disordered; sequence MQQEPDRNEQGYCSSPPSSNKQDSSDDTKKIQRREKNRIAAQKSRQRQTQKADSLHI. Positions 27–90 constitute a bZIP domain; that stretch reads DTKKIQRREK…KYLTCVLSTH (64 aa). The interval 29 to 51 is basic motif; sequence KKIQRREKNRIAAQKSRQRQTQK. The segment at 55 to 83 is leucine-zipper; the sequence is LHIESENLERLNSALRGEISGLREELKYL.

This sequence belongs to the bZIP family.

It is found in the nucleus. It localises to the cytoplasm. AP-1 family transcription factor that controls the differentiation of lineage-specific cells in the immune system: specifically mediates the differentiation of T-helper 17 cells (Th17), follicular T-helper cells (TfH), CD8(+) dendritic cells and class-switch recombination (CSR) in B-cells. The protein is Basic leucine zipper transcriptional factor ATF-like (batf) of Xenopus tropicalis (Western clawed frog).